The sequence spans 419 residues: UDP-N-acetylglucosamine 1-carboxyvinyltransferase (419 aa).

22–23 (KN) is a phosphoenolpyruvate binding site. R91 provides a ligand contact to UDP-N-acetyl-alpha-D-glucosamine. C115 functions as the Proton donor in the catalytic mechanism. C115 is modified (2-(S-cysteinyl)pyruvic acid O-phosphothioketal). UDP-N-acetyl-alpha-D-glucosamine-binding positions include 120–124 (RPVDL), 160–163 (KVSV), D305, and I327.

The protein belongs to the EPSP synthase family. MurA subfamily.

The protein resides in the cytoplasm. It carries out the reaction phosphoenolpyruvate + UDP-N-acetyl-alpha-D-glucosamine = UDP-N-acetyl-3-O-(1-carboxyvinyl)-alpha-D-glucosamine + phosphate. It functions in the pathway cell wall biogenesis; peptidoglycan biosynthesis. Functionally, cell wall formation. Adds enolpyruvyl to UDP-N-acetylglucosamine. In Klebsiella pneumoniae subsp. pneumoniae (strain ATCC 700721 / MGH 78578), this protein is UDP-N-acetylglucosamine 1-carboxyvinyltransferase.